An 868-amino-acid polypeptide reads, in one-letter code: DNA mismatch repair protein MutS (868 aa).

Residue 623-630 (GPNMAGKS) participates in ATP binding.

Belongs to the DNA mismatch repair MutS family.

In terms of biological role, this protein is involved in the repair of mismatches in DNA. It is possible that it carries out the mismatch recognition step. This protein has a weak ATPase activity. In Magnetococcus marinus (strain ATCC BAA-1437 / JCM 17883 / MC-1), this protein is DNA mismatch repair protein MutS.